Here is a 283-residue protein sequence, read N- to C-terminus: Pantothenate synthetase (283 aa).

Met30–His37 provides a ligand contact to ATP. His37 (proton donor) is an active-site residue. Residue Gln61 participates in (R)-pantoate binding. Gln61 provides a ligand contact to beta-alanine. Residue Gly149–Asp152 participates in ATP binding. Residue Gln155 participates in (R)-pantoate binding. Leu186–Arg189 contributes to the ATP binding site.

Belongs to the pantothenate synthetase family. Homodimer.

It localises to the cytoplasm. It carries out the reaction (R)-pantoate + beta-alanine + ATP = (R)-pantothenate + AMP + diphosphate + H(+). It functions in the pathway cofactor biosynthesis; (R)-pantothenate biosynthesis; (R)-pantothenate from (R)-pantoate and beta-alanine: step 1/1. Functionally, catalyzes the condensation of pantoate with beta-alanine in an ATP-dependent reaction via a pantoyl-adenylate intermediate. The protein is Pantothenate synthetase of Escherichia coli O127:H6 (strain E2348/69 / EPEC).